We begin with the raw amino-acid sequence, 339 residues long: MAGRVKIKQKELIDSTVKNKNVMNLFHEIIGSKGNINFSVVWPKFKKIKQSVYDYISTLSVLEKASVMQNFEDDKKMLELFVQKLWAAYEGYFKYPEIEKYEVEGQVNFNQVPHYVLEKFSQLYRSRINSELVTLILNSCAFLSKYNDYILKKDPYILTITPGLCFSPIPNFEDLNFKYLYNSDKNSQHDKDFIMFILYKLYTAALGVYNAISIPDIDVEDLENIILSSVSQIKKQIPRCKDAFNKIESSVHLLRKNFNTYYSDYVGSGYNPTIIMEQYIKDISQDSKNISPRISYQFRTIIKYYRDMIATKHQTMDPQVLNLVKHVEKKLDMLDREKN.

This sequence belongs to the asfivirus H339R family. Interacts with NACA (alpha chain of nascent polypeptide-associated complex).

The protein resides in the host cytoplasm. Its subcellular location is the host nucleus. It is found in the virion. In Ornithodoros (relapsing fever ticks), this protein is Protein H339R.